A 303-amino-acid chain; its full sequence is N-acetyl-D-glucosamine kinase (303 aa).

Residues 4-11 and 133-140 contribute to the ATP site; these read GFDVGGTK and GFGGGLIF. Residues His157, Cys177, Cys179, and Cys184 each contribute to the Zn(2+) site.

The protein belongs to the ROK (NagC/XylR) family. NagK subfamily.

The catalysed reaction is N-acetyl-D-glucosamine + ATP = N-acetyl-D-glucosamine 6-phosphate + ADP + H(+). The protein operates within cell wall biogenesis; peptidoglycan recycling. Functionally, catalyzes the phosphorylation of N-acetyl-D-glucosamine (GlcNAc) derived from cell-wall degradation, yielding GlcNAc-6-P. This Aliivibrio fischeri (strain ATCC 700601 / ES114) (Vibrio fischeri) protein is N-acetyl-D-glucosamine kinase.